Reading from the N-terminus, the 102-residue chain is Small ribosomal subunit protein uS10 (102 aa).

The protein belongs to the universal ribosomal protein uS10 family. As to quaternary structure, part of the 30S ribosomal subunit.

Functionally, involved in the binding of tRNA to the ribosomes. The polypeptide is Small ribosomal subunit protein uS10 (Leptospira biflexa serovar Patoc (strain Patoc 1 / Ames)).